The sequence spans 491 residues: GTPase Der (491 aa).

Positions 3 to 166 constitute an EngA-type G 1 domain; that stretch reads PVIALVGRPN…AALGIFPRDD (164 aa). GTP-binding positions include 9 to 16, 56 to 60, and 118 to 121; these read GRPNVGKS, DTGGI, and NKVD. Residues 164 to 191 form a disordered region; sequence RDDEGEEGEGEAEVVAEGEEPKRVPGPS. The span at 166-181 shows a compositional bias: acidic residues; the sequence is DEGEEGEGEAEVVAEG. Positions 182–191 are enriched in basic and acidic residues; it reads EEPKRVPGPS. Residues 196–369 enclose the EngA-type G 2 domain; that stretch reads IKIAIIGRPN…SVQAAFQSAV (174 aa). GTP is bound by residues 202-209, 249-253, and 314-317; these read GRPNVGKS, DTAGV, and NKWD. A KH-like domain is found at 370–454; sequence TRWPTSRLTR…PIRIEYKGGD (85 aa). The span at 452–464 shows a compositional bias: basic and acidic residues; the sequence is GGDNPYEGKKNSL. The interval 452 to 491 is disordered; that stretch reads GGDNPYEGKKNSLTERQVNKKRRLMSHHKKAEKKRRDKKR. Basic residues predominate over residues 470-491; the sequence is NKKRRLMSHHKKAEKKRRDKKR.

It belongs to the TRAFAC class TrmE-Era-EngA-EngB-Septin-like GTPase superfamily. EngA (Der) GTPase family. In terms of assembly, associates with the 50S ribosomal subunit.

Its function is as follows. GTPase that plays an essential role in the late steps of ribosome biogenesis. This chain is GTPase Der, found in Azotobacter vinelandii (strain DJ / ATCC BAA-1303).